The following is a 274-amino-acid chain: Diaminopimelate epimerase (274 aa).

Asn11, Gln44, and Asn64 together coordinate substrate. Cys73 (proton donor) is an active-site residue. Substrate-binding positions include 74 to 75, Asn157, Asn190, and 208 to 209; these read GN and ER. Catalysis depends on Cys217, which acts as the Proton acceptor. 218–219 lines the substrate pocket; that stretch reads GS.

This sequence belongs to the diaminopimelate epimerase family. In terms of assembly, homodimer.

It localises to the cytoplasm. The catalysed reaction is (2S,6S)-2,6-diaminopimelate = meso-2,6-diaminopimelate. Its pathway is amino-acid biosynthesis; L-lysine biosynthesis via DAP pathway; DL-2,6-diaminopimelate from LL-2,6-diaminopimelate: step 1/1. Catalyzes the stereoinversion of LL-2,6-diaminopimelate (L,L-DAP) to meso-diaminopimelate (meso-DAP), a precursor of L-lysine and an essential component of the bacterial peptidoglycan. This chain is Diaminopimelate epimerase, found in Erwinia tasmaniensis (strain DSM 17950 / CFBP 7177 / CIP 109463 / NCPPB 4357 / Et1/99).